The sequence spans 279 residues: Malonyl-[acyl-carrier protein] O-methyltransferase (279 aa).

The protein belongs to the methyltransferase superfamily.

The catalysed reaction is malonyl-[ACP] + S-adenosyl-L-methionine = malonyl-[ACP] methyl ester + S-adenosyl-L-homocysteine. It participates in cofactor biosynthesis; biotin biosynthesis. In terms of biological role, converts the free carboxyl group of a malonyl-thioester to its methyl ester by transfer of a methyl group from S-adenosyl-L-methionine (SAM). It allows to synthesize pimeloyl-ACP via the fatty acid synthetic pathway. The protein is Malonyl-[acyl-carrier protein] O-methyltransferase of Hahella chejuensis (strain KCTC 2396).